The following is a 953-amino-acid chain: Zinc finger CCCH domain-containing protein 18 (953 aa).

Met-1 bears the N-acetylmethionine mark. Basic and acidic residues predominate over residues 1–14 (MDVAESPERDPHSP). 2 disordered regions span residues 1-222 (MDVA…RPRP) and 391-928 (QYTE…LSRR). Residue Ser-6 is modified to Phosphoserine. Over residues 15-26 (EDEEQPQGLSDD) the composition is skewed to acidic residues. Ser-34, Ser-46, Ser-53, Ser-59, Ser-67, Ser-74, Ser-78, Ser-83, and Ser-95 each carry phosphoserine. A compositionally biased stretch (acidic residues) spans 60–72 (QEEEDNHSDEEDR). The span at 97–106 (CEEEGDEGEE) shows a compositional bias: acidic residues. A coiled-coil region spans residues 105–134 (EEDRTSDLRDEASSVTRELDEHELDYDEEV). Positions 107–124 (DRTSDLRDEASSVTRELD) are enriched in basic and acidic residues. Thr-109 is subject to Phosphothreonine. Phosphoserine is present on residues Ser-110 and Ser-118. 2 stretches are compositionally biased toward acidic residues: residues 125 to 136 (EHELDYDEEVPE) and 143 to 158 (QEDE…DEEK). The segment covering 159 to 168 (GEGTPREEGK) has biased composition (basic and acidic residues). Thr-162 is modified (phosphothreonine). Phosphoserine occurs at positions 173 and 179. A compositionally biased stretch (basic and acidic residues) spans 175-190 (GEKESLEAAKEKKKED). Acidic residues predominate over residues 191–207 (DDGEIDDGEIDDDDLEE). The segment covering 208 to 217 (GEVKDPSDRK) has biased composition (basic and acidic residues). Residues 219 to 245 (RPRPTCRFFMKGNCTWGMNCRFIHPGV) form a C3H1-type zinc finger. The span at 396–482 (EPYHNYRERE…EKEREKEKGK (87 aa)) shows a compositional bias: basic and acidic residues. Residues 399–464 (HNYRERERER…RERAKRDEKD (66 aa)) are a coiled coil. Ser-487 bears the Phosphoserine mark. Residue Lys-510 forms a Glycyl lysine isopeptide (Lys-Gly) (interchain with G-Cter in SUMO2) linkage. Positions 510-520 (KRADEWKDPWR) are enriched in basic and acidic residues. A phosphoserine mark is found at Ser-532, Ser-534, and Ser-536. Low complexity predominate over residues 545–606 (SASSASASNS…SRSRSFSSSP (62 aa)). Residues Lys-622 and Lys-661 each participate in a glycyl lysine isopeptide (Lys-Gly) (interchain with G-Cter in SUMO2) cross-link. Positions 661–670 (KPGDPREARR) are enriched in basic and acidic residues. Low complexity-rich tracts occupy residues 692-725 (GSSY…SAHS) and 736-750 (ASPV…PAPA). Residues 760 to 774 (KKEDGVKEEKRKRDS) are compositionally biased toward basic and acidic residues. Residue Lys-766 forms a Glycyl lysine isopeptide (Lys-Gly) (interchain with G-Cter in SUMO2) linkage. Residues 778 to 798 (PPKSAKPPAGGKSSQQPSTPQ) are compositionally biased toward low complexity. Position 814 is an N6-acetyllysine (Lys-814). A Glycyl lysine isopeptide (Lys-Gly) (interchain with G-Cter in SUMO2) cross-link involves residue Lys-817. Positions 824–841 (AADKGSRKRYEPSDKDRQ) are enriched in basic and acidic residues. 5 positions are modified to phosphoserine: Ser-842, Ser-852, Ser-868, Ser-893, and Ser-896. Low complexity predominate over residues 893–906 (SPQSKSSSKVTSVP). Lys-908 is covalently cross-linked (Glycyl lysine isopeptide (Lys-Gly) (interchain with G-Cter in SUMO2)). The span at 916–925 (STKSGKASTL) shows a compositional bias: polar residues. The stretch at 921-950 (KASTLSRREELLKQLKAVEDAIARKRAKIP) forms a coiled coil.

In terms of assembly, interacts with ZFC3H1 in a RNase-insensitive manner.

The protein resides in the nucleus. The sequence is that of Zinc finger CCCH domain-containing protein 18 from Homo sapiens (Human).